The chain runs to 699 residues: Endogenous retrovirus group K member 8 Env polyprotein (699 aa).

Residues 1–47 (MNPSEMQRKAPPRRRRHRNRAPLTHKMNKMVTSEEQMKLPSTKKAEP) are disordered. Positions 1–89 (MNPSEMQRKA…ALMIVSMVVS (89 aa)) are cleaved as a signal peptide. Positions 10-20 (APPRRRRHRNR) are enriched in basic residues. Over 90-632 (LPMPAGAAVA…NLNPVTWVKT (543 aa)) the chain is Extracellular. Residues N100, N128, N153, N274, N355, N372, and N461 are each glycosylated (N-linked (GlcNAc...) asparagine). The tract at residues 466–486 (FIFTLIAVIMGLIAVTATAAV) is fusion peptide. N-linked (GlcNAc...) asparagine glycosylation is found at N507, N554, N566, and N585. The helical transmembrane segment at 633 to 653 (IGSTTIINLILILVCLFCLLL) threads the bilayer. Over 654 to 699 (VCRCTQQLRRDSDHRERAMMTMAVLSKRKGGNVGKSKRDQIVTVSV) the chain is Cytoplasmic.

This sequence belongs to the beta type-B retroviral envelope protein family. HERV class-II K(HML-2) env subfamily. The surface (SU) and transmembrane (TM) proteins form a heterodimer. SU and TM are attached by noncovalent interactions or by a labile interchain disulfide bond. In terms of processing, specific enzymatic cleavages in vivo yield the mature SU and TM proteins.

It is found in the cell membrane. The protein resides in the virion. Retroviral envelope proteins mediate receptor recognition and membrane fusion during early infection. Endogenous envelope proteins may have kept, lost or modified their original function during evolution. This endogenous envelope protein has lost its original fusogenic properties. Its function is as follows. SU mediates receptor recognition. In terms of biological role, TM anchors the envelope heterodimer to the viral membrane through one transmembrane domain. The other hydrophobic domain, called fusion peptide, mediates fusion of the viral membrane with the target cell membrane. In Homo sapiens (Human), this protein is Endogenous retrovirus group K member 8 Env polyprotein (ERVK-8).